Consider the following 333-residue polypeptide: Holliday junction branch migration complex subunit RuvB (333 aa).

The large ATPase domain (RuvB-L) stretch occupies residues 1–182; that stretch reads MDERLLSGES…FGVLSRLEYY (182 aa). Residues L21, R22, G63, K66, T67, T68, 129-131, R172, Y182, and R219 each bind ATP; that span reads EDF. T67 is a Mg(2+) binding site. Residues 183 to 253 form a small ATPAse domain (RuvB-S) region; it reads TVDQLSAIVE…ITQMALELLQ (71 aa). The tract at residues 256-333 is head domain (RuvB-H); the sequence is KLGLDHIDHK…EHFGMEMPKV (78 aa). Residues R311 and R316 each coordinate DNA.

It belongs to the RuvB family. Homohexamer. Forms an RuvA(8)-RuvB(12)-Holliday junction (HJ) complex. HJ DNA is sandwiched between 2 RuvA tetramers; dsDNA enters through RuvA and exits via RuvB. An RuvB hexamer assembles on each DNA strand where it exits the tetramer. Each RuvB hexamer is contacted by two RuvA subunits (via domain III) on 2 adjacent RuvB subunits; this complex drives branch migration. In the full resolvosome a probable DNA-RuvA(4)-RuvB(12)-RuvC(2) complex forms which resolves the HJ.

Its subcellular location is the cytoplasm. The enzyme catalyses ATP + H2O = ADP + phosphate + H(+). The RuvA-RuvB-RuvC complex processes Holliday junction (HJ) DNA during genetic recombination and DNA repair, while the RuvA-RuvB complex plays an important role in the rescue of blocked DNA replication forks via replication fork reversal (RFR). RuvA specifically binds to HJ cruciform DNA, conferring on it an open structure. The RuvB hexamer acts as an ATP-dependent pump, pulling dsDNA into and through the RuvAB complex. RuvB forms 2 homohexamers on either side of HJ DNA bound by 1 or 2 RuvA tetramers; 4 subunits per hexamer contact DNA at a time. Coordinated motions by a converter formed by DNA-disengaged RuvB subunits stimulates ATP hydrolysis and nucleotide exchange. Immobilization of the converter enables RuvB to convert the ATP-contained energy into a lever motion, pulling 2 nucleotides of DNA out of the RuvA tetramer per ATP hydrolyzed, thus driving DNA branch migration. The RuvB motors rotate together with the DNA substrate, which together with the progressing nucleotide cycle form the mechanistic basis for DNA recombination by continuous HJ branch migration. Branch migration allows RuvC to scan DNA until it finds its consensus sequence, where it cleaves and resolves cruciform DNA. This is Holliday junction branch migration complex subunit RuvB from Bacillus mycoides (strain KBAB4) (Bacillus weihenstephanensis).